The sequence spans 98 residues: Feather keratin 3 (98 aa).

Belongs to the avian keratin family. The avian keratins (F-ker, S-ker, C-ker and B-ker) are a complex mixture of very similar polypeptides.

The protein is Feather keratin 3 of Gallus gallus (Chicken).